The sequence spans 199 residues: Imidazole glycerol phosphate synthase subunit HisH 2 (199 aa).

The Glutamine amidotransferase type-1 domain occupies 1–199 (MIAVIDVSGN…NNFLSLESKC (199 aa)). Cys76 acts as the Nucleophile in catalysis. Active-site residues include His177 and Glu179.

As to quaternary structure, heterodimer of HisH and HisF.

The protein resides in the cytoplasm. The enzyme catalyses 5-[(5-phospho-1-deoxy-D-ribulos-1-ylimino)methylamino]-1-(5-phospho-beta-D-ribosyl)imidazole-4-carboxamide + L-glutamine = D-erythro-1-(imidazol-4-yl)glycerol 3-phosphate + 5-amino-1-(5-phospho-beta-D-ribosyl)imidazole-4-carboxamide + L-glutamate + H(+). The catalysed reaction is L-glutamine + H2O = L-glutamate + NH4(+). It participates in amino-acid biosynthesis; L-histidine biosynthesis; L-histidine from 5-phospho-alpha-D-ribose 1-diphosphate: step 5/9. Functionally, IGPS catalyzes the conversion of PRFAR and glutamine to IGP, AICAR and glutamate. The HisH subunit provides the glutamine amidotransferase activity that produces the ammonia necessary to HisF for the synthesis of IGP and AICAR. In Legionella pneumophila (strain Lens), this protein is Imidazole glycerol phosphate synthase subunit HisH 2.